The primary structure comprises 60 residues: MTCCNQQSSQPKTTTNCAESSCYKKTWSDHRGTRIERGCGCPQVKPGIKLECCHTNECNN.

Disulfide bonds link Cys-3-Cys-22, Cys-17-Cys-39, Cys-41-Cys-52, and Cys-53-Cys-58.

The protein belongs to the three-finger toxin family. Short-chain subfamily. Type I alpha-neurotoxin sub-subfamily. As to expression, expressed by the venom gland.

It localises to the secreted. In terms of biological role, binds to muscle nicotinic acetylcholine receptor (nAChR) and inhibit acetylcholine from binding to the receptor, thereby impairing neuromuscular transmission. The protein is Short neurotoxin 1 of Hydrophis schistosus (Beaked sea snake).